The primary structure comprises 291 residues: Inositol-1-monophosphatase (291 aa).

Residues glutamate 83, aspartate 104, isoleucine 106, and aspartate 107 each contribute to the Mg(2+) site. Glutamate 83 is a substrate binding site. Residues 106-109 (IDGT), arginine 206, and aspartate 235 contribute to the substrate site. Aspartate 235 contributes to the Mg(2+) binding site.

This sequence belongs to the inositol monophosphatase superfamily. It depends on Mg(2+) as a cofactor.

It carries out the reaction a myo-inositol phosphate + H2O = myo-inositol + phosphate. This chain is Inositol-1-monophosphatase (suhB), found in Mycobacterium leprae (strain TN).